Consider the following 341-residue polypeptide: GTP-binding protein REM 2 (341 aa).

Over residues 1 to 13 (MHTDLDTDMDADT) the composition is skewed to acidic residues. Disordered regions lie at residues 1–72 (MHTD…SMPV) and 84–106 (VDEL…GSGE). Residues 18-32 (LCSSSSRQASPSGTP) show a composition bias toward polar residues. Ser-27 is subject to Phosphoserine. The segment covering 43 to 54 (QKPEKLLAELDR) has biased composition (basic and acidic residues). Residues 94-105 (SSSGSSDSLGSG) are compositionally biased toward low complexity. Residues 122-129 (GESGVGKS), 230-233 (NKSD), and 261-262 (AA) each bind GTP. The segment at 282–309 (RGRGHAGGQRPEPSSPDGPAPPTRRESL) is disordered. The segment covering 294–303 (PSSPDGPAPP) has biased composition (pro residues). Phosphoserine is present on Ser-296.

The protein belongs to the small GTPase superfamily. RGK family. As to expression, expressed in brain and kidney.

It localises to the cell membrane. Functionally, binds GTP saturably and exhibits a low intrinsic rate of GTP hydrolysis. The protein is GTP-binding protein REM 2 (Rem2) of Rattus norvegicus (Rat).